Consider the following 444-residue polypeptide: Phosphoglucosamine mutase (444 aa).

Ser-102 functions as the Phosphoserine intermediate in the catalytic mechanism. Residues Ser-102, Asp-241, Asp-243, and Asp-245 each coordinate Mg(2+). Ser-102 is modified (phosphoserine).

This sequence belongs to the phosphohexose mutase family. Requires Mg(2+) as cofactor. Post-translationally, activated by phosphorylation.

The enzyme catalyses alpha-D-glucosamine 1-phosphate = D-glucosamine 6-phosphate. Catalyzes the conversion of glucosamine-6-phosphate to glucosamine-1-phosphate. This is Phosphoglucosamine mutase from Actinobacillus pleuropneumoniae serotype 5b (strain L20).